The chain runs to 694 residues: Polyribonucleotide nucleotidyltransferase (694 aa).

Positions 485 and 491 each coordinate Mg(2+). Residues 552–611 (PRIETMQIKPNKIATVIGPGGKQIRQIIEEAGVQIDINDSGLVSISASSPQAIEKAKSMI) form the KH domain. Positions 621–689 (GKIYEGRVTS…EKGQYKLSHK (69 aa)) constitute an S1 motif domain.

It belongs to the polyribonucleotide nucleotidyltransferase family. Requires Mg(2+) as cofactor.

Its subcellular location is the cytoplasm. The catalysed reaction is RNA(n+1) + phosphate = RNA(n) + a ribonucleoside 5'-diphosphate. Involved in mRNA degradation. Catalyzes the phosphorolysis of single-stranded polyribonucleotides processively in the 3'- to 5'-direction. The protein is Polyribonucleotide nucleotidyltransferase of Chlamydia caviae (strain ATCC VR-813 / DSM 19441 / 03DC25 / GPIC) (Chlamydophila caviae).